The chain runs to 146 residues: UPF0178 protein BCAH820_3075 (146 aa).

The protein belongs to the UPF0178 family.

In Bacillus cereus (strain AH820), this protein is UPF0178 protein BCAH820_3075.